A 751-amino-acid polypeptide reads, in one-letter code: Semaphorin-3C (751 aa).

An N-terminal signal peptide occupies residues 1-20 (MAFRTICVLVGVFICSICVK). A Sema domain is found at 28–511 (RVYLTFDELR…SNEGVSQVSL (484 aa)). Asparagine 81 carries an N-linked (GlcNAc...) asparagine glycan. A disulfide bridge links cysteine 101 with cysteine 112. A glycan (N-linked (GlcNAc...) asparagine) is linked at asparagine 123. Cysteine 130 and cysteine 139 are joined by a disulfide. Asparagine 252 and asparagine 268 each carry an N-linked (GlcNAc...) asparagine glycan. 2 cysteine pairs are disulfide-bonded: cysteine 266–cysteine 378 and cysteine 290–cysteine 338. A glycan (N-linked (GlcNAc...) asparagine) is linked at asparagine 465. Cysteine 514 and cysteine 532 form a disulfide bridge. The 85-residue stretch at 571–655 (AYRNAAEIVQ…TENSFKQTIA (85 aa)) folds into the Ig-like C2-type domain. Asparagine 585 and asparagine 586 each carry an N-linked (GlcNAc...) asparagine glycan. A disulfide bridge connects residues cysteine 643 and cysteine 709. Residues 712-731 (TRQQHQQGDESQKMRGDYGK) show a composition bias toward basic and acidic residues. Residues 712 to 751 (TRQQHQQGDESQKMRGDYGKLKALINSRKSRNRRNQLPES) are disordered.

This sequence belongs to the semaphorin family. In terms of assembly, interacts with PLXND1. As to expression, expressed intensely in the heart, skeletal muscle, colon, small intestine, ovary, testis, and prostate. Faint expression ubiquitously among other organs, including brain.

It is found in the secreted. Its function is as follows. Binds to plexin family members and plays an important role in the regulation of developmental processes. Required for normal cardiovascular development during embryogenesis. Functions as attractant for growing axons, and thereby plays an important role in axon growth and axon guidance. This chain is Semaphorin-3C (SEMA3C), found in Homo sapiens (Human).